Reading from the N-terminus, the 187-residue chain is GTP cyclohydrolase 1 (187 aa).

The Zn(2+) site is built by Cys76, His79, and Cys148.

The protein belongs to the GTP cyclohydrolase I family. As to quaternary structure, toroid-shaped homodecamer, composed of two pentamers of five dimers.

It catalyses the reaction GTP + H2O = 7,8-dihydroneopterin 3'-triphosphate + formate + H(+). It functions in the pathway cofactor biosynthesis; 7,8-dihydroneopterin triphosphate biosynthesis; 7,8-dihydroneopterin triphosphate from GTP: step 1/1. This chain is GTP cyclohydrolase 1, found in Streptococcus agalactiae serotype III (strain NEM316).